Here is a 211-residue protein sequence, read N- to C-terminus: NEDD4 family-interacting protein 1 (211 aa).

Residues 1-13 (MSEQSSSRYQQLQ) show a composition bias toward polar residues. A disordered region spans residues 1-48 (MSEQSSSRYQQLQNEEEPGENPQASTDAPPPYSSIAGESSGLFDYKDE). Residues 1 to 106 (MSEQSSSRYQ…ADQLRIGNDG (106 aa)) are Cytoplasmic-facing. 2 consecutive short sequence motifs (PPxY motif) follow at residues 29–32 (PPPY) and 54–57 (PPSY). Residues 107-127 (IFMLTFFMAFLFNWIGFFLSF) form a helical membrane-spanning segment. Over 128–133 (CLTSSA) the chain is Extracellular. A helical transmembrane segment spans residues 134 to 154 (AGRYGAISGFGLSLIKWILIV). Residues 155–162 (RFSTYFPG) lie on the Cytoplasmic side of the membrane. The helical transmembrane segment at 163-183 (YFDGQYWLWWVFLVLGFLLFL) threads the bilayer. At 184-211 (RGFINYAKVRKMPDNFSTLPRTRVLFIY) the chain is on the extracellular side.

The protein localises to the golgi apparatus membrane. May play a role in Golgi structure maintenance. The protein is NEDD4 family-interacting protein 1 (ndfip1) of Xenopus tropicalis (Western clawed frog).